The following is a 354-amino-acid chain: Uroporphyrinogen decarboxylase (354 aa).

Substrate-binding positions include 27–31 (RQAGR), D77, Y154, T209, and H327.

This sequence belongs to the uroporphyrinogen decarboxylase family. In terms of assembly, homodimer.

It localises to the cytoplasm. The enzyme catalyses uroporphyrinogen III + 4 H(+) = coproporphyrinogen III + 4 CO2. The protein operates within porphyrin-containing compound metabolism; protoporphyrin-IX biosynthesis; coproporphyrinogen-III from 5-aminolevulinate: step 4/4. In terms of biological role, catalyzes the decarboxylation of four acetate groups of uroporphyrinogen-III to yield coproporphyrinogen-III. In Escherichia fergusonii (strain ATCC 35469 / DSM 13698 / CCUG 18766 / IAM 14443 / JCM 21226 / LMG 7866 / NBRC 102419 / NCTC 12128 / CDC 0568-73), this protein is Uroporphyrinogen decarboxylase.